The following is a 132-amino-acid chain: Protein NrdI (132 aa).

It belongs to the NrdI family.

In terms of biological role, probably involved in ribonucleotide reductase function. This is Protein NrdI from Bartonella quintana (strain Toulouse) (Rochalimaea quintana).